The chain runs to 264 residues: Proteasome assembly chaperone 2 (264 aa).

At Thr-137 the chain carries Phosphothreonine.

The protein belongs to the PSMG2 family. In terms of assembly, forms a heterodimer with PSMG1. The PSMG1-PSMG2 heterodimer interacts directly with the PSMA5 and PSMA7 proteasome alpha subunits. In terms of processing, degraded by the proteasome upon completion of 20S proteasome maturation.

The protein resides in the nucleus. Its function is as follows. Chaperone protein which promotes assembly of the 20S proteasome as part of a heterodimer with PSMG1. The PSMG1-PSMG2 heterodimer binds to the PSMA5 and PSMA7 proteasome subunits, promotes assembly of the proteasome alpha subunits into the heteroheptameric alpha ring and prevents alpha ring dimerization. This Mus musculus (Mouse) protein is Proteasome assembly chaperone 2.